The following is a 203-amino-acid chain: Thymidylate kinase (203 aa).

10-17 (GIDGAGKS) is a binding site for ATP.

Belongs to the thymidylate kinase family.

The catalysed reaction is dTMP + ATP = dTDP + ADP. Functionally, phosphorylation of dTMP to form dTDP in both de novo and salvage pathways of dTTP synthesis. The sequence is that of Thymidylate kinase from Cupriavidus taiwanensis (strain DSM 17343 / BCRC 17206 / CCUG 44338 / CIP 107171 / LMG 19424 / R1) (Ralstonia taiwanensis (strain LMG 19424)).